The following is a 459-amino-acid chain: Alcohol acyl transferase 1 allele GSd (459 aa).

Residues His164 and Asn385 each act as proton acceptor in the active site.

The protein belongs to the plant acyltransferase family. In terms of tissue distribution, expressed at very low levels in the cortex and skin of ripe fruit.

In terms of biological role, involved in the biosynthesis of volatile esters which confer ripe apple fruit flavor. Alcohol acyl transferase that can use a wide range of alcohols as substrate to produce esters. The sequence is that of Alcohol acyl transferase 1 allele GSd from Malus domestica (Apple).